We begin with the raw amino-acid sequence, 473 residues long: Probable transporter MCH2 (473 aa).

Residues 1–37 lie on the Cytoplasmic side of the membrane; it reads MSEERHEDHHRDVENKLNLNGKDDINGNTSISIEVPD. Residues 38 to 58 form a helical membrane-spanning segment; the sequence is GGYGWFILLAFILYNFSTWGA. The Extracellular segment spans residues 59–83; it reads NSGYAIYLAHYLENNTFAGGSKLDY. Residue N72 is glycosylated (N-linked (GlcNAc...) asparagine). The chain crosses the membrane as a helical span at residues 84-105; that stretch reads ASIGGLAFSCGLFFAPVITWLY. The Cytoplasmic segment spans residues 106-111; the sequence is HIFSIQ. A helical membrane pass occupies residues 112–135; it reads FIIGLGILFQGAALLLAAFSVTLW. The Extracellular portion of the chain corresponds to 136–141; the sequence is EIYLTQ. The helical transmembrane segment at 142–163 threads the bilayer; the sequence is GVLIGFGLAFIFIPSVTLIPLW. Residues 164–169 lie on the Cytoplasmic side of the membrane; that stretch reads FRNKRS. Residues 170-186 traverse the membrane as a helical segment; that stretch reads LASGIGTAGSGLGGIVF. At 187 to 200 the chain is on the extracellular side; that stretch reads NLGMQSILQKRGVK. A helical transmembrane segment spans residues 201–220; it reads WALIAQCIICTSLSTIALML. The Cytoplasmic portion of the chain corresponds to 221 to 243; that stretch reads TRTTHQGLRQHKRSYKFELLDYD. The chain crosses the membrane as a helical span at residues 244–268; the sequence is VLSNFAVWLLFGFVSFAMLGYVVLL. The Extracellular segment spans residues 269–286; the sequence is YSLSDFTVSLGYTSKQGS. Residues 287–304 traverse the membrane as a helical segment; sequence YVSCMVSVGSLLGRPIVG. Over 305–312 the chain is Cytoplasmic; it reads HIADKYGS. A helical transmembrane segment spans residues 313–332; it reads LTVGMILHLVMAILCWAMWI. The Extracellular segment spans residues 333-342; that stretch reads PCKNLATAIA. Residues 343 to 362 form a helical membrane-spanning segment; that stretch reads FGLLVGSIMGTIWPTIASIV. At 363 to 370 the chain is on the cytoplasmic side; it reads TRIVGLQK. The chain crosses the membrane as a helical span at residues 371 to 394; sequence LPGTFGSTWIFMAAFALVAPIIGL. Topologically, residues 395-408 are extracellular; the sequence is ELRSTDTNGNDYYR. Residues 409–433 traverse the membrane as a helical segment; the sequence is TAIFVGFAYFGVSLCQWLLRGFIIA. Residues 434–473 lie on the Cytoplasmic side of the membrane; that stretch reads RDEIAVREAYSADQNELHLNVKLSHMSKCLFRYKQLPRRV.

The protein belongs to the major facilitator superfamily. Monocarboxylate porter (TC 2.A.1.13) family.

The protein resides in the membrane. In terms of biological role, probable transporter. Does not act in the transport of monocarboxylic acids across the plasma membrane. This chain is Probable transporter MCH2 (MCH2), found in Saccharomyces cerevisiae (strain ATCC 204508 / S288c) (Baker's yeast).